Here is a 123-residue protein sequence, read N- to C-terminus: UPF0102 protein CLJ_B2665 (123 aa).

This sequence belongs to the UPF0102 family.

In Clostridium botulinum (strain 657 / Type Ba4), this protein is UPF0102 protein CLJ_B2665.